The sequence spans 133 residues: UPF0292 protein TON_0187 (133 aa).

In terms of domain architecture, Toprim spans 20 to 100; it reads EGAIIVEGPR…RVDSETRKEL (81 aa). Glu26, Asp69, and Asp71 together coordinate Mg(2+).

The protein belongs to the UPF0292 family. It depends on Mg(2+) as a cofactor.

The polypeptide is UPF0292 protein TON_0187 (Thermococcus onnurineus (strain NA1)).